The chain runs to 236 residues: Aspartate/glutamate leucyltransferase (236 aa).

The protein belongs to the R-transferase family. Bpt subfamily.

It localises to the cytoplasm. It catalyses the reaction N-terminal L-glutamyl-[protein] + L-leucyl-tRNA(Leu) = N-terminal L-leucyl-L-glutamyl-[protein] + tRNA(Leu) + H(+). It carries out the reaction N-terminal L-aspartyl-[protein] + L-leucyl-tRNA(Leu) = N-terminal L-leucyl-L-aspartyl-[protein] + tRNA(Leu) + H(+). In terms of biological role, functions in the N-end rule pathway of protein degradation where it conjugates Leu from its aminoacyl-tRNA to the N-termini of proteins containing an N-terminal aspartate or glutamate. This chain is Aspartate/glutamate leucyltransferase, found in Halorhodospira halophila (strain DSM 244 / SL1) (Ectothiorhodospira halophila (strain DSM 244 / SL1)).